A 1154-amino-acid polypeptide reads, in one-letter code: Kinesin-like protein KIN-7E, chloroplastic (1154 aa).

Low complexity-rich tracts occupy residues 1–14 and 29–109; these read MSSS…SISP and VAAA…PPVA. A chloroplast-targeting transit peptide spans 1 to 21; the sequence is MSSSSRPGRASISPFRSRRTS. The interval 1-109 is disordered; it reads MSSSSRPGRA…RAAGRAPPVA (109 aa). The Kinesin motor domain maps to 119–437; the sequence is NIMVTVRFRP…LKFAHRSKHI (319 aa). Residue 199–206 participates in ATP binding; the sequence is GVTSSGKT. The stretch at 441–523 forms a coiled coil; sequence ASQNKIIDEK…AALMGRIQRL (83 aa). The segment at 620 to 674 is disordered; the sequence is LSTSVDSESTASGSPSFSRSSQQKHPLLDLKDGRRKSMTRKGDDPALTDSFPGRT. The segment covering 628-640 has biased composition (low complexity); the sequence is STASGSPSFSRSS. Coiled-coil stretches lie at residues 734–761 and 801–845; these read DSQI…LEQR and ADNR…DNVA. The tract at residues 838 to 885 is disordered; the sequence is AKNEDNVASMQSSEPSSTSSNPRDLANEVASHSKMPSRTTEDHTESPL. Residues 846–857 show a composition bias toward low complexity; that stretch reads SMQSSEPSSTSS. Positions 894 to 967 form a coiled coil; that stretch reads AEIENLKLDK…DLAAAKDQTR (74 aa).

The protein belongs to the TRAFAC class myosin-kinesin ATPase superfamily. Kinesin family. KIN-7 subfamily.

The protein resides in the plastid. It localises to the chloroplast. The sequence is that of Kinesin-like protein KIN-7E, chloroplastic from Oryza sativa subsp. japonica (Rice).